A 494-amino-acid polypeptide reads, in one-letter code: Cytochrome P450 monooxygenase acrF (494 aa).

Cys-420 lines the heme pocket.

This sequence belongs to the cytochrome P450 family. Heme is required as a cofactor.

It participates in secondary metabolite biosynthesis. Cytochrome P450 monooxygenase; part of the cluster that mediates the biosynthesis of acurin A, a highly reduced polyketide coupled to a serine via a peptide bond. The activities of the highly reducing polyketide synthase acrA and the nonribosomal peptide synthetase acrB are collectively responsible for the synthesis of the acurin A core structure with a heptaketide backbone produced by acrA covalently fused to a L-serine by acrB. After the formation of the PK-NRP hybrid product, it is detached from acrB by reductive release to set up the formation of the lactam ring by aldol condensation. The hydrolyase acrC then catalyzes water loss to generate a double bond in the ring. This double bond is probably reduced, which is followed by three oxidations at C-22 to generate the carboxylic acid moiety, involving probably the FAD-binding monooxygenase acrE and the cytochrome P450 monooxygenases acrD and acrF. Finally, a last methylation step performed by the O-methyltransferase acrG leads to the production of acurin A. The chain is Cytochrome P450 monooxygenase acrF from Aspergillus aculeatus (strain ATCC 16872 / CBS 172.66 / WB 5094).